A 433-amino-acid chain; its full sequence is MKIVVLGAGVLGVTSAWYLAKAGHEVTVIDRQEGPALETSFANAGEISPGYSSPWAAPGVPLKALKWMFQRHAPLVVQPRLDWQRVSWMARMLANCTSSAYAVNKSRMVRLAEYSRDCLGELRAETGIRYDERTQGTLQVFRKQQQLDAAGKDIEVLRADGVPFEVLDRDGCVAAEPGLAGSAERIVGGLRLPGDETGDCFLFTNRLAEMATEAGVTFRWGVSIEALEAEGGRISAVRTDKGRLTADRYVLAMGSYSPRMVRHLGLKLPVYPLKGYSLTIDIQDESRAPVSTVMDETYKVAITRLGDRIRVGGLAEIAGYDLSLNPRRKETLAKSVGELFGGAGDAEQALFWTGLRPMTPDGTPIVGATPIPNLYLNTGHGTLGWTMSAGSGRLIADLISGRKPDIAAEDLGYARYMRGAKAAGRPALQPARA.

3-17 contributes to the FAD binding site; it reads IVVLGAGVLGVTSAW.

It belongs to the DadA oxidoreductase family. Requires FAD as cofactor.

The enzyme catalyses a D-alpha-amino acid + A + H2O = a 2-oxocarboxylate + AH2 + NH4(+). It participates in amino-acid degradation; D-alanine degradation; NH(3) and pyruvate from D-alanine: step 1/1. Oxidative deamination of D-amino acids. The chain is D-amino acid dehydrogenase from Paracoccus denitrificans (strain Pd 1222).